Reading from the N-terminus, the 333-residue chain is tRNA-modifying protein YgfZ (333 aa).

Positions 33 and 195 each coordinate folate.

This sequence belongs to the tRNA-modifying YgfZ family.

Its subcellular location is the cytoplasm. Functionally, folate-binding protein involved in regulating the level of ATP-DnaA and in the modification of some tRNAs. It is probably a key factor in regulatory networks that act via tRNA modification, such as initiation of chromosomal replication. This chain is tRNA-modifying protein YgfZ, found in Pectobacterium atrosepticum (strain SCRI 1043 / ATCC BAA-672) (Erwinia carotovora subsp. atroseptica).